Reading from the N-terminus, the 324-residue chain is Dehydrogenase/reductase SDR family member 7C-A (324 aa).

An N-terminal signal peptide occupies residues Met1–Ala17. Residue Val41–Val65 participates in NAD(+) binding. Ser178 lines the substrate pocket. The active-site Proton acceptor is Tyr191.

This sequence belongs to the short-chain dehydrogenases/reductases (SDR) family.

The protein localises to the secreted. In terms of biological role, putative oxidoreductase. This chain is Dehydrogenase/reductase SDR family member 7C-A (dhrs7ca), found in Danio rerio (Zebrafish).